The sequence spans 379 residues: Cyclic dinucleotide synthase CdnE (379 aa).

UTP is bound by residues Gln-107, Ser-109, Asp-123, and Lys-179. A Mg(2+)-binding site is contributed by Asp-123. A Mg(2+)-binding site is contributed by Asp-193. Residues Asn-229, Lys-257, and Ser-274 each coordinate UTP. The Pyrimidine specificity motif (R/Q)xW in donor pocket motif lies at Lys-328 to Phe-330.

Belongs to the CD-NTase family. E02 subfamily. Mg(2+) is required as a cofactor.

The catalysed reaction is 2 UTP = c-di-UMP + 2 diphosphate. It carries out the reaction UTP + ATP = 3',3'-cUAMP + 2 diphosphate. The enzyme catalyses UTP + CTP = cyclic CMP-UMP + 2 diphosphate. Functionally, cyclic nucleotide synthase (second messenger synthase) of a CBASS antivirus system. CBASS (cyclic oligonucleotide-based antiphage signaling system) provides immunity against bacteriophage. The CD-NTase protein synthesizes cyclic nucleotides in response to infection; these serve as specific second messenger signals. The signals activate a diverse range of effectors, leading to bacterial cell death and thus abortive phage infection. The effector protein for this system is membrane protein Cap15. A type I-B(UU) CBASS system. In terms of biological role, cyclic dinucleotide synthase that preferentially catalyzes the synthesis of 3',3'-cyclic UMP-UMP (c-di-UMP) and 3',3'-cyclic UMP-AMP, with minor amounts of 3',3'-cyclic UMP-CMP, which are second messengers for cell signal transduction. Protects E.coli against phage infection. When the CBASS operon (cap15-cdnE) is introduced in E.coli MG1655 it protects against phages T2, T4, T5, T6, SECPhi4, SECPhi6, SECPhi17, SECPhi18 and SECPhi27, but not against phage T7. The polypeptide is Cyclic dinucleotide synthase CdnE (Yersinia aleksiciae).